The following is a 201-amino-acid chain: B-cell CLL/lymphoma 7 protein family member A (201 aa).

A disordered region spans residues tyrosine 46 to serine 201. The span at proline 54–glycine 71 shows a compositional bias: basic and acidic residues. Composition is skewed to polar residues over residues glutamate 73–proline 83, serine 93–proline 114, and glutamine 133–glycine 142. Residues threonine 158–glycine 167 show a composition bias toward basic and acidic residues. Residues aspartate 168–alanine 179 show a composition bias toward polar residues. Basic and acidic residues predominate over residues glycine 192–serine 201.

Belongs to the BCL7 family.

This chain is B-cell CLL/lymphoma 7 protein family member A (bcl7a), found in Danio rerio (Zebrafish).